Here is a 378-residue protein sequence, read N- to C-terminus: P2X receptor A (378 aa).

The Cytoplasmic segment spans residues 1–27; that stretch reads MGFSFDWDDIFQYSTVKIVRIRDRRLG. Residues 28–48 form a helical membrane-spanning segment; that stretch reads ILHLSFLVGIVAYIVVYSAII. The Lumenal portion of the chain corresponds to 49 to 307; sequence KKGYLFTEVP…IQTGTIGSFH (259 aa). The interval 290-303 is pore-forming motif; sequence RHGIRVIFIQTGTI. Residues 308–328 traverse the membrane as a helical segment; that stretch reads FQTLLLTLVSGLGLLAVATTV. Over 329 to 378 the chain is Cytoplasmic; that stretch reads VDQLAIRLLPQRKSYSSLKFQVTESMSNPMKKRITTDEGEDVLYTRIEGL.

Belongs to the P2X receptor family.

The protein resides in the contractile vacuole membrane. Functionally, P2X receptors are ATP-gated ion channels that play a role in intracellular calcium signaling. Not required for the purinergic response to extracellular nucleotides. Inward currents evoked by intracellular ATP and ATP analogs. Exclusively selective for ATP over other nucleotides. Insensitive to P2 receptor antagonists PPADS, suramin and 2',3'-O-(2,4,6-trinitrophenyl)-ATP but inhibited by nanomolar concentrations of copper and sodium ion. More permeable to ammonium than either sodium or potassium ions and less permeable to choline. It has been reported that p2xA is not essential for osmoregulation, however this information is in contradiction with another source which indicates that p2xA is required for osmoregulation. Found to be permeable to chloride ions. Inhibited by copper and sodium ions. The polypeptide is P2X receptor A (p2xA) (Dictyostelium discoideum (Social amoeba)).